The primary structure comprises 137 residues: Ribosome-binding factor A (137 aa).

The protein belongs to the RbfA family. In terms of assembly, monomer. Binds 30S ribosomal subunits, but not 50S ribosomal subunits or 70S ribosomes.

Its subcellular location is the cytoplasm. Functionally, one of several proteins that assist in the late maturation steps of the functional core of the 30S ribosomal subunit. Associates with free 30S ribosomal subunits (but not with 30S subunits that are part of 70S ribosomes or polysomes). Required for efficient processing of 16S rRNA. May interact with the 5'-terminal helix region of 16S rRNA. This Cereibacter sphaeroides (strain KD131 / KCTC 12085) (Rhodobacter sphaeroides) protein is Ribosome-binding factor A.